A 624-amino-acid chain; its full sequence is Acidic juvenile hormone-suppressible protein 1 (624 aa).

The first 18 residues, 1 to 18, serve as a signal peptide directing secretion; the sequence is MARLVLCALALLVAGGLA. N-linked (GlcNAc...) asparagine glycosylation is found at Asn75 and Asn478.

This sequence belongs to the hemocyanin family.

Its subcellular location is the secreted. The protein localises to the extracellular space. The sequence is that of Acidic juvenile hormone-suppressible protein 1 (AJSP-1) from Trichoplusia ni (Cabbage looper).